The sequence spans 294 residues: Bifunctional protein FolD (294 aa).

NADP(+) contacts are provided by residues 166–168, Ser191, and Ile232; that span reads GRS.

It belongs to the tetrahydrofolate dehydrogenase/cyclohydrolase family. Homodimer.

It catalyses the reaction (6R)-5,10-methylene-5,6,7,8-tetrahydrofolate + NADP(+) = (6R)-5,10-methenyltetrahydrofolate + NADPH. It carries out the reaction (6R)-5,10-methenyltetrahydrofolate + H2O = (6R)-10-formyltetrahydrofolate + H(+). It functions in the pathway one-carbon metabolism; tetrahydrofolate interconversion. Functionally, catalyzes the oxidation of 5,10-methylenetetrahydrofolate to 5,10-methenyltetrahydrofolate and then the hydrolysis of 5,10-methenyltetrahydrofolate to 10-formyltetrahydrofolate. This is Bifunctional protein FolD from Bradyrhizobium sp. (strain BTAi1 / ATCC BAA-1182).